The following is a 180-amino-acid chain: Large ribosomal subunit protein uL5 (180 aa).

It belongs to the universal ribosomal protein uL5 family. Part of the 50S ribosomal subunit; part of the 5S rRNA/L5/L18/L25 subcomplex. Contacts the 5S rRNA and the P site tRNA. Forms a bridge to the 30S subunit in the 70S ribosome.

This is one of the proteins that bind and probably mediate the attachment of the 5S RNA into the large ribosomal subunit, where it forms part of the central protuberance. In the 70S ribosome it contacts protein S13 of the 30S subunit (bridge B1b), connecting the 2 subunits; this bridge is implicated in subunit movement. Contacts the P site tRNA; the 5S rRNA and some of its associated proteins might help stabilize positioning of ribosome-bound tRNAs. The protein is Large ribosomal subunit protein uL5 of Lactobacillus acidophilus (strain ATCC 700396 / NCK56 / N2 / NCFM).